We begin with the raw amino-acid sequence, 460 residues long: Sexual development regulator velC (460 aa).

Disordered regions lie at residues 67-131 (VGPD…PQAP), 152-216 (YAPR…RPDP), and 422-460 (KKGNDRSKNTRSHDDSSDGEQDEGEATLQGKRRRRSARQ). Residues 192 to 207 (PVTTNGRPPDSNSPMV) show a composition bias toward polar residues. In terms of domain architecture, Velvet spans 239–422 (LSDNRFNLQI…KEQGCIISIK (184 aa)). Positions 423 to 437 (KGNDRSKNTRSHDDS) are enriched in basic and acidic residues. Residues 451–460 (GKRRRRSARQ) show a composition bias toward basic residues.

It belongs to the velvet family. VelC subfamily. As to quaternary structure, interacts with VE1.

The protein localises to the nucleus. In terms of biological role, velvet-domain-containing protein that acts as a positive regulator of sexual development. Dispensable for regulation of conidial size, hyphal hydrophobicity, fumonisin production, and oxidant resistance. This Gibberella moniliformis (strain M3125 / FGSC 7600) (Maize ear and stalk rot fungus) protein is Sexual development regulator velC.